We begin with the raw amino-acid sequence, 648 residues long: Serine/arginine repetitive matrix protein 3 (648 aa).

The tract at residues 1–44 is disordered; it reads MSSTVNNGATGMPAPPDAANGFPQPGASSGSWPRAEEELRAAEP. A CWF21 domain is found at 55–98; it reads LDHERKRRVELKCMELQEMMEEQGYSEEEIRQKVGTFRQMLMEK. A compositionally biased stretch (basic and acidic residues) spans 99 to 109; it reads EGVLTREDRPG. Disordered regions lie at residues 99–139 and 154–648; these read EGVL…DGPV and YRTK…SGGF. 3 stretches are compositionally biased toward basic residues: residues 168–186, 199–211, and 219–243; these read PKKK…KKRR, LRKK…KHRR, and RRKR…RKRP. Low complexity-rich tracts occupy residues 257–276 and 289–317; these read SASS…GSPS and TGSQ…NGGS. Over residues 381–409 the composition is skewed to basic residues; it reads ARRRRRRRRRRRSRSSANAPRRRGRRRTK. 3 stretches are compositionally biased toward low complexity: residues 414–428, 461–471, and 493–502; these read RGSS…SSSD, RPASTSPSPGT, and SWSSSRSPSK. Residues 525–544 show a composition bias toward basic and acidic residues; the sequence is LGRDKDSEGRARHAEAEAAR. Basic residues predominate over residues 545 to 560; it reads TRRRSRSYSPIRKRRR. The span at 579–648 shows a compositional bias: low complexity; it reads IPYYRPSPSS…SRSSSESGGF (70 aa).

It belongs to the CWC21 family.

Its function is as follows. May play a role in regulating breast cancer cell invasiveness. May be involved in RYBP-mediated breast cancer progression. This Mus musculus (Mouse) protein is Serine/arginine repetitive matrix protein 3 (Srrm3).